A 224-amino-acid polypeptide reads, in one-letter code: MRLWKARVLKLVLKTAKDSRLGLNSKWLSLKLGDAGNPRSLAIRFILTNYNKLSIQSWFSLRRVEIISNNSIQAVFNPTGVYAPSGYSYRCQRVGSLQQDQALLLPSDTDDGSSLWEVTFIDFQIQGFAIKGGRFTKAQDCASSFSPAFLIGLAMSLILLLVLAYALHMLIYLRYLDQQYDLIASPAHFSQLKARDTAEEKELLRSQGAECYKLRSQQISKIYV.

The helical transmembrane segment at proline 147–leucine 167 threads the bilayer.

The protein belongs to the vacuolar ATPase subunit S1 family.

Its subcellular location is the membrane. This Homo sapiens (Human) protein is V-type proton ATPase subunit S1-like protein (ATP6AP1L).